A 663-amino-acid chain; its full sequence is 4-hydroxy-3-methylbut-2-en-1-yl diphosphate synthase (flavodoxin) (663 aa).

The [4Fe-4S] cluster site is built by Cys568, Cys571, Cys602, and Glu609.

The protein belongs to the IspG family. It depends on [4Fe-4S] cluster as a cofactor.

It carries out the reaction (2E)-4-hydroxy-3-methylbut-2-enyl diphosphate + oxidized [flavodoxin] + H2O + 2 H(+) = 2-C-methyl-D-erythritol 2,4-cyclic diphosphate + reduced [flavodoxin]. Its pathway is isoprenoid biosynthesis; isopentenyl diphosphate biosynthesis via DXP pathway; isopentenyl diphosphate from 1-deoxy-D-xylulose 5-phosphate: step 5/6. Converts 2C-methyl-D-erythritol 2,4-cyclodiphosphate (ME-2,4cPP) into 1-hydroxy-2-methyl-2-(E)-butenyl 4-diphosphate. This Leptospira borgpetersenii serovar Hardjo-bovis (strain L550) protein is 4-hydroxy-3-methylbut-2-en-1-yl diphosphate synthase (flavodoxin).